The chain runs to 146 residues: VHLTGDEKSAVAALWGKVNVEEVGGEALGRLLVVYPWTQRFFESFGALSSPDAVMGNPKVKAHGKKVLGAFSDGLAHLDNLKGTFAQLSELHCDKLHVDPENFRLLGNVLVCVLARNFGKEFTPLLQAAFQKVVAGVATALAHKYH.

Positions 2 to 146 constitute a Globin domain; it reads HLTGDEKSAV…VATALAHKYH (145 aa). S50 carries the post-translational modification Phosphoserine. H63 and H92 together coordinate heme b.

It belongs to the globin family. As to quaternary structure, heterotetramer of two delta chains and two alpha chains. As to expression, red blood cells.

This Aotus trivirgatus (Three-striped night monkey) protein is Hemoglobin subunit delta (HBD).